The primary structure comprises 460 residues: Ribosomal protein uS12 methylthiotransferase RimO (460 aa).

Residues 16 to 130 enclose the MTTase N-terminal domain; it reads NKIHFISLGC…ILSAIESKEA (115 aa). 6 residues coordinate [4Fe-4S] cluster: Cys25, Cys61, Cys93, Cys164, Cys168, and Cys171. A Radical SAM core domain is found at 150-382; that stretch reads STPKHYAYLK…SQTQKKNVEK (233 aa). Positions 385–455 constitute a TRAM domain; sequence KQLVGQIVEA…GYDLVGRVIK (71 aa).

It belongs to the methylthiotransferase family. RimO subfamily. The cofactor is [4Fe-4S] cluster.

The protein localises to the cytoplasm. The enzyme catalyses L-aspartate(89)-[ribosomal protein uS12]-hydrogen + (sulfur carrier)-SH + AH2 + 2 S-adenosyl-L-methionine = 3-methylsulfanyl-L-aspartate(89)-[ribosomal protein uS12]-hydrogen + (sulfur carrier)-H + 5'-deoxyadenosine + L-methionine + A + S-adenosyl-L-homocysteine + 2 H(+). Functionally, catalyzes the methylthiolation of an aspartic acid residue of ribosomal protein uS12. This chain is Ribosomal protein uS12 methylthiotransferase RimO, found in Chlamydia caviae (strain ATCC VR-813 / DSM 19441 / 03DC25 / GPIC) (Chlamydophila caviae).